A 304-amino-acid polypeptide reads, in one-letter code: Acetylglutamate kinase (304 aa).

Substrate contacts are provided by residues 69–70, arginine 91, and asparagine 202; that span reads GG.

This sequence belongs to the acetylglutamate kinase family. ArgB subfamily.

It is found in the cytoplasm. The catalysed reaction is N-acetyl-L-glutamate + ATP = N-acetyl-L-glutamyl 5-phosphate + ADP. It participates in amino-acid biosynthesis; L-arginine biosynthesis; N(2)-acetyl-L-ornithine from L-glutamate: step 2/4. Its function is as follows. Catalyzes the ATP-dependent phosphorylation of N-acetyl-L-glutamate. The protein is Acetylglutamate kinase of Caulobacter vibrioides (strain ATCC 19089 / CIP 103742 / CB 15) (Caulobacter crescentus).